A 244-amino-acid chain; its full sequence is Zinc import ATP-binding protein ZnuC 2 (244 aa).

An ABC transporter domain is found at 3-218; it reads IGCASLTIQL…PEYLALFGID (216 aa). Residue 35-42 coordinates ATP; sequence GPNGSGKT.

It belongs to the ABC transporter superfamily. Zinc importer (TC 3.A.1.15.5) family. In terms of assembly, the complex is composed of two ATP-binding proteins (ZnuC), two transmembrane proteins (ZnuB) and a solute-binding protein (ZnuA).

It localises to the cell inner membrane. The catalysed reaction is Zn(2+)(out) + ATP(in) + H2O(in) = Zn(2+)(in) + ADP(in) + phosphate(in) + H(+)(in). Functionally, part of the ABC transporter complex ZnuABC involved in zinc import. Responsible for energy coupling to the transport system. The polypeptide is Zinc import ATP-binding protein ZnuC 2 (Hahella chejuensis (strain KCTC 2396)).